Here is a 743-residue protein sequence, read N- to C-terminus: Cytosolic neutral trehalase (743 aa).

The Ca(2+) site is built by Asp-95, Asp-97, Asn-99, Gln-101, and Asp-106. Substrate is bound by residues Arg-285, 292-293 (WD), Asn-329, 338-340 (RSQ), Glu-405, Arg-454, and Gly-457. Residues Asp-459 and Glu-664 each act as proton donor/acceptor in the active site.

It belongs to the glycosyl hydrolase 37 family. Requires Ca(2+) as cofactor.

It localises to the cytoplasm. The catalysed reaction is alpha,alpha-trehalose + H2O = alpha-D-glucose + beta-D-glucose. It functions in the pathway carbohydrate degradation. Hydrolyzes intracellular trehalose to glucose. This Beauveria bassiana (strain ARSEF 2860) (White muscardine disease fungus) protein is Cytosolic neutral trehalase.